The chain runs to 344 residues: Protein L-Myc-1-B (344 aa).

Composition is skewed to polar residues over residues 104-113 (GSPRVTNTQK) and 213-223 (NTMSPQHNFHS). 2 disordered regions span residues 104-162 (GSPR…EDEI) and 208-271 (LPPE…YLER). The span at 259 to 270 (DLAKRKNHNYLE) shows a compositional bias: basic and acidic residues. The 53-residue stretch at 261–313 (AKRKNHNYLERKRRNDLRSRFLALREEVPSLSRSTKTPKVVVLSKATEFLKGL) folds into the bHLH domain. Residues 313–341 (LVIQEQQLTAEKLKLWSRHQQLLRRISQL) form a leucine-zipper region.

Efficient DNA binding requires dimerization with another bHLH protein. Binds DNA as a heterodimer with MAX. As to expression, high levels in oocytes, modest levels in kidney and low levels in spleen.

Its subcellular location is the nucleus. The polypeptide is Protein L-Myc-1-B (mycl1-b) (Xenopus laevis (African clawed frog)).